A 919-amino-acid polypeptide reads, in one-letter code: Tight junction protein ZO-3 (919 aa).

Positions 11-93 constitute a PDZ 1 domain; it reads TATLSKDPRR…MANITVKRPR (83 aa). A disordered region spans residues 92 to 173; that stretch reads PRRIHLPATK…SPGGGSEANG (82 aa). The residue at position 112 (Ser-112) is a Phosphoserine. Residues 117–131 show a composition bias toward basic and acidic residues; sequence GPQRVEEVDQGRGYD. Ser-136 carries the phosphoserine modification. The segment covering 147–163 has biased composition (basic residues); the sequence is RRPRPGRRGRAGSHGRR. Ser-164, Ser-169, Ser-203, and Ser-319 each carry phosphoserine. One can recognise a PDZ 2 domain in the interval 195–272; that stretch reads SVLVKRRDSE…KLSLLVLRDR (78 aa). A disordered region spans residues 279–377; the sequence is IPPAVSDSDS…SSQSMEDRGY (99 aa). Thr-325 is modified (phosphothreonine). Ser-327 bears the Phosphoserine mark. A compositionally biased stretch (basic and acidic residues) spans 332–360; it reads PRLRRESSVDSRTISEPDEQRSELPRESS. The residue at position 371 (Ser-371) is a Phosphoserine. In terms of domain architecture, PDZ 3 spans 380-446; the sequence is DTRVVRFLKG…LTREEAVQFL (67 aa). The SH3 domain occupies 475–549; the sequence is GDSFYIRTHF…PNQSRAEQLA (75 aa). A Guanylate kinase-like domain is found at 580–761; sequence LRRGAKKTTQ…WYQELKAIIR (182 aa). Ser-591 carries the phosphoserine modification. Residues 791–801 show a composition bias toward low complexity; that stretch reads ADSSADLSCDS. Disordered regions lie at residues 791–886 and 899–919; these read ADSS…DSMR and RVHD…ATDL. Residues 812–828 show a composition bias toward gly residues; that stretch reads EGGAYTDGEGYTDGEGG. Phosphoserine occurs at positions 856, 905, and 906.

This sequence belongs to the MAGUK family. In terms of assembly, interacts with occludin OCLN, claudins and TPJ1. Interacts with PATJ. Interacts with UBN1. Interacts with FASLG. Interacts with CCND1. In terms of processing, phosphorylated.

It localises to the cell membrane. The protein localises to the cell junction. It is found in the tight junction. The protein resides in the nucleus. In terms of biological role, TJP1, TJP2, and TJP3 are closely related scaffolding proteins that link tight junction (TJ) transmembrane proteins such as claudins, junctional adhesion molecules, and occludin to the actin cytoskeleton. The tight junction acts to limit movement of substances through the paracellular space and as a boundary between the compositionally distinct apical and basolateral plasma membrane domains of epithelial and endothelial cells. Binds and recruits PATJ to tight junctions where it connects and stabilizes apical and lateral components of tight junctions. Promotes cell-cycle progression through the sequestration of cyclin D1 (CCND1) at tight junctions during mitosis which prevents CCND1 degradation during M-phase and enables S-phase transition. With TJP1 and TJP2, participates in the junctional retention and stability of the transcription factor DBPA, but is not involved in its shuttling to the nucleus. Contrary to TJP2, TJP3 is dispensable for individual viability, embryonic development, epithelial differentiation, and the establishment of TJs, at least in the laboratory environment. The chain is Tight junction protein ZO-3 (TJP3) from Homo sapiens (Human).